Consider the following 308-residue polypeptide: ADP-L-glycero-D-manno-heptose-6-epimerase (308 aa).

NADP(+) contacts are provided by residues 10 to 11 (FI), 31 to 32 (DN), K38, K53, 75 to 79 (EGACS), and N92. The Proton acceptor role is filled by Y139. Residue K143 participates in NADP(+) binding. N168 is a binding site for substrate. The NADP(+) site is built by V169 and K177. The Proton acceptor role is filled by K177. Residues S179, H186, 200-203 (FAGS), R208, and Y271 each bind substrate.

The protein belongs to the NAD(P)-dependent epimerase/dehydratase family. HldD subfamily. As to quaternary structure, homopentamer. The cofactor is NADP(+).

It carries out the reaction ADP-D-glycero-beta-D-manno-heptose = ADP-L-glycero-beta-D-manno-heptose. Its pathway is nucleotide-sugar biosynthesis; ADP-L-glycero-beta-D-manno-heptose biosynthesis; ADP-L-glycero-beta-D-manno-heptose from D-glycero-beta-D-manno-heptose 7-phosphate: step 4/4. It functions in the pathway bacterial outer membrane biogenesis; LOS core biosynthesis. In terms of biological role, catalyzes the interconversion between ADP-D-glycero-beta-D-manno-heptose and ADP-L-glycero-beta-D-manno-heptose via an epimerization at carbon 6 of the heptose. This Haemophilus influenzae (strain ATCC 51907 / DSM 11121 / KW20 / Rd) protein is ADP-L-glycero-D-manno-heptose-6-epimerase.